The following is a 298-amino-acid chain: Protease HtpX homolog (298 aa).

The next 2 membrane-spanning stretches (helical) occupy residues 16–36 (VMFG…YLFW) and 38–58 (SWVS…LIMI). H144 lines the Zn(2+) pocket. Residue E145 is part of the active site. Zn(2+) is bound at residue H148. The next 2 membrane-spanning stretches (helical) occupy residues 159-179 (IALA…NWFW) and 197-217 (IIGL…ASIA). E226 serves as a coordination point for Zn(2+).

The protein belongs to the peptidase M48B family. Zn(2+) serves as cofactor.

The protein localises to the cell membrane. The polypeptide is Protease HtpX homolog (Levilactobacillus brevis (strain ATCC 367 / BCRC 12310 / CIP 105137 / JCM 1170 / LMG 11437 / NCIMB 947 / NCTC 947) (Lactobacillus brevis)).